We begin with the raw amino-acid sequence, 229 residues long: Glutamine amidotransferase-like class 1 domain-containing protein 1 (229 aa).

The N-terminal stretch at 1-34 (MKKQGAPVSGGGTERLTKPSCLMVGSAVAEGVSA) is a signal peptide. N-linked (GlcNAc...) asparagine glycosylation is found at Asn154 and Asn212.

Belongs to the peptidase C56 family. Homotetramer. Component of the FERRY complex.

The protein resides in the secreted. The protein localises to the early endosome. In terms of biological role, component of the FERRY complex (Five-subunit Endosomal Rab5 and RNA/ribosome intermediary). The FERRY complex directly interacts with mRNAs and RAB5A, and functions as a RAB5A effector involved in the localization and the distribution of specific mRNAs most likely by mediating their endosomal transport. The complex recruits mRNAs and ribosomes to early endosomes through direct mRNA-interaction. The protein is Glutamine amidotransferase-like class 1 domain-containing protein 1 of Xenopus laevis (African clawed frog).